The chain runs to 145 residues: Putative pre-16S rRNA nuclease (145 aa).

The protein belongs to the YqgF nuclease family.

It is found in the cytoplasm. In terms of biological role, could be a nuclease involved in processing of the 5'-end of pre-16S rRNA. The chain is Putative pre-16S rRNA nuclease from Sulfurihydrogenibium sp. (strain YO3AOP1).